Consider the following 187-residue polypeptide: uncharacterized protein (187 aa).

Residues 8 to 28 (FFILLAINFILAAGFVALVLL) traverse the membrane as a helical segment.

Its subcellular location is the membrane. This is an uncharacterized protein from Bacillus subtilis (strain 168).